The chain runs to 647 residues: Glutamyl-tRNA(Gln) amidotransferase subunit B, mitochondrial (647 aa).

The transit peptide at 1–16 directs the protein to the mitochondrion; it reads MARNLCRNVQTTPRPL. A disordered region spans residues 39-77; sequence PRPRYFGSSTAKSAKKKSNNKAYSGSSMSAGDASAGPSR. The span at 58-76 shows a compositional bias: low complexity; it reads NKAYSGSSMSAGDASAGPS.

It belongs to the GatB/GatE family. GatB subfamily. As to quaternary structure, subunit of the heterotrimeric GatCAB amidotransferase (AdT) complex, composed of A, B and C subunits.

The protein resides in the mitochondrion. It catalyses the reaction L-glutamyl-tRNA(Gln) + L-glutamine + ATP + H2O = L-glutaminyl-tRNA(Gln) + L-glutamate + ADP + phosphate + H(+). Allows the formation of correctly charged Gln-tRNA(Gln) through the transamidation of misacylated Glu-tRNA(Gln) in the mitochondria. The reaction takes place in the presence of glutamine and ATP through an activated gamma-phospho-Glu-tRNA(Gln). This is Glutamyl-tRNA(Gln) amidotransferase subunit B, mitochondrial from Mycosarcoma maydis (Corn smut fungus).